A 559-amino-acid polypeptide reads, in one-letter code: MYLSRSAEWSALESHYQDISHQAMIDLFSTDPNRHERFSLSFNAIHLDYSKNRISARTMELLMDLVRRSGIEKKRRQMFEGEQINFTEHRSVLHTALRRPPGYTMTIDGNDVASEVSDVLDQMKAFCKKVISGEWKGYTGKRITDVVNIGIGGSDLGPFMVTEALKPFAHGKLKVHFVSNVDGSHLVETLRGLNPETTLFIIASKTFTTQETLANAVSARAWFLVKAGNRDHVAKHFVAVSTNREKVEEFGIDPDNMFRFWDWVGGRYSLWSAIGLSIALYLGFDRFRELLAGAHAMDEHFLNAPLEENMPMILAMLGIWYNNFFGAHSQAIIPYDQYLHRFPAYLQQLDMESNGKRVDRAGHEVDYATGPVIWGEPGTNAQHAFFQLLHQGTEIVPVDFIVSLKSQNPVGEHHDMLVANCFAQSEALMKGKSEAEARAELEAAGLSGGDLEKLLPHKLFPGNRPTNTIVLDELNPFNLGSLIALYEHKVFVQGVVWNINSFDQWGVELGKQLAKAILPEFDAVDPVETHDASTNALINRYRQFRNGLKFPKSNQLKMF.

The Proton donor role is filled by E352. Residues H383 and K511 contribute to the active site.

The protein belongs to the GPI family.

The protein resides in the cytoplasm. The enzyme catalyses alpha-D-glucose 6-phosphate = beta-D-fructose 6-phosphate. The protein operates within carbohydrate biosynthesis; gluconeogenesis. Its pathway is carbohydrate degradation; glycolysis; D-glyceraldehyde 3-phosphate and glycerone phosphate from D-glucose: step 2/4. Catalyzes the reversible isomerization of glucose-6-phosphate to fructose-6-phosphate. The chain is Glucose-6-phosphate isomerase from Chlorobaculum tepidum (strain ATCC 49652 / DSM 12025 / NBRC 103806 / TLS) (Chlorobium tepidum).